The primary structure comprises 402 residues: Protein indeterminate-domain 12 (402 aa).

Residues 47–66 (TETHKPKKKRGLPGNPDPDA) are disordered. Ser-72 bears the Phosphoserine mark. 2 consecutive C2H2-type zinc fingers follow at residues 82–104 (FVCE…RRGH) and 124–154 (YVCP…CRKH). Positions 146–153 (IKKHFCRK) match the Nuclear localization signal motif. The C2H2-type 2; degenerate zinc-finger motif lies at 159–183 (WKCEKCSKFYAVQSDWKAHTKICGT). The Zn(2+) site is built by Cys-161, Cys-164, His-177, Cys-181, Cys-188, Cys-190, His-203, and Cys-207. The segment at 186–209 (YRCDCGTLFSRKDTFITHRAFCDA) adopts a CCHC-type 2; atypical zinc-finger fold. The segment at 196–208 (RKDTFITHRAFCD) is SHR-binding.

The protein resides in the nucleus. Its function is as follows. Probable transcription factor. This chain is Protein indeterminate-domain 12, found in Arabidopsis thaliana (Mouse-ear cress).